The chain runs to 121 residues: Small ribosomal subunit protein uS13 (121 aa).

Residues 97–121 (PVRGQKTHSNARTRKGPRASRIKKK) are disordered. The span at 101-121 (QKTHSNARTRKGPRASRIKKK) shows a compositional bias: basic residues.

This sequence belongs to the universal ribosomal protein uS13 family. In terms of assembly, part of the 30S ribosomal subunit. Forms a loose heterodimer with protein S19. Forms two bridges to the 50S subunit in the 70S ribosome.

Located at the top of the head of the 30S subunit, it contacts several helices of the 16S rRNA. In the 70S ribosome it contacts the 23S rRNA (bridge B1a) and protein L5 of the 50S subunit (bridge B1b), connecting the 2 subunits; these bridges are implicated in subunit movement. Contacts the tRNAs in the A and P-sites. The protein is Small ribosomal subunit protein uS13 of Kosmotoga olearia (strain ATCC BAA-1733 / DSM 21960 / TBF 19.5.1).